A 600-amino-acid chain; its full sequence is Lamin-B2 (600 aa).

Residues 2–27 (SGTPIRGTPGGTPLSPTRISRLQEKE) form a head region. Ser16 is subject to Phosphoserine; by CDK1. Positions 25-381 (EKEELRQLND…KLLEGEEERL (357 aa)) constitute an IF rod domain. A coil 1A region spans residues 28-64 (ELRQLNDRLAVYIDRVRALELENDRLLVKISEKEEVT). Positions 75–212 (YESELADARR…NVFEEEIRET (138 aa)) are coil 1B. The interval 237–379 (QALEDLRNQH…YRKLLEGEEE (143 aa)) is coil 2. Disordered regions lie at residues 377–449 (EEER…QMSQ) and 568–600 (ENEEEEDEADFGEEDLFNQQGDPRTTSRGCLVM). The tract at residues 380 to 600 (RLKLSPSPSS…RTTSRGCLVM (221 aa)) is tail. Low complexity predominate over residues 383–410 (LSPSPSSRVTVSRATSSSSSSSTSLVRS). Phosphoserine is present on Ser386. The Nuclear localization signal signature appears at 414 to 419 (KRRRIE). An LTD domain is found at 445 to 562 (FQMSQQASAT…EEVAVRTVTK (118 aa)). A compositionally biased stretch (acidic residues) spans 569–583 (NEEEEDEADFGEEDL). A compositionally biased stretch (polar residues) spans 584–600 (FNQQGDPRTTSRGCLVM). The residue at position 597 (Cys597) is a Cysteine methyl ester. A lipid anchor (S-farnesyl cysteine) is attached at Cys597. Positions 598-600 (LVM) are cleaved as a propeptide — removed in mature form.

Belongs to the intermediate filament family. As to quaternary structure, homodimer. Lamin dimers then assemble into dimeric head-to-tail polymers. Ultimately, two head-to-tail polymers assemble laterally into a protofilament with a uniformly shaped rod of 3.5 nm in diameter. In terms of processing, phosphorylation plays a key role in lamin organization, subcellular localization and nuclear envelope disintegration. Phosphorylation by CDK1 at Ser-16 at the onset of mitosis drives lamin disassembly and nuclear envelope breakdown.

The protein resides in the nucleus lamina. It localises to the nucleus envelope. It is found in the nucleus. The protein localises to the nucleoplasm. Its subcellular location is the nucleus matrix. Lamins are intermediate filament proteins that assemble into a filamentous meshwork, and which constitute the major components of the nuclear lamina, a fibrous layer on the nucleoplasmic side of the inner nuclear membrane. Lamins provide a framework for the nuclear envelope, bridging the nuclear envelope and chromatin. Plays an important role in nuclear assembly, chromatin organization, nuclear membrane and telomere dynamics. The sequence is that of Lamin-B2 (LMNB2) from Gallus gallus (Chicken).